We begin with the raw amino-acid sequence, 363 residues long: Adenosine deaminase (363 aa).

The residue at position 2 (A2) is an N-acetylalanine. Residues H15 and H17 each coordinate Zn(2+). Substrate contacts are provided by H17 and D19. Position 54 is an N6-acetyllysine (K54). Position 184 (G184) interacts with substrate. Position 214 (H214) interacts with Zn(2+). Catalysis depends on E217, which acts as the Proton donor. K232 is subject to N6-acetyllysine. Position 295 (D295) interacts with Zn(2+). D296 contacts substrate.

Belongs to the metallo-dependent hydrolases superfamily. Adenosine and AMP deaminases family. In terms of assembly, interacts with DPP4 (via extracellular domain). Interacts with PLG (via Kringle 4 domain); the interaction stimulates PLG activation when in complex with DPP4. It depends on Zn(2+) as a cofactor. Expressed in gastrointestinal tissues (at protein level).

The protein resides in the cell membrane. The protein localises to the cell junction. It is found in the cytoplasmic vesicle lumen. It localises to the cytoplasm. Its subcellular location is the lysosome. The catalysed reaction is adenosine + H2O + H(+) = inosine + NH4(+). The enzyme catalyses 2'-deoxyadenosine + H2O + H(+) = 2'-deoxyinosine + NH4(+). It catalyses the reaction cordycepin + H2O + H(+) = 3'-deoxyinosine + NH4(+). Its function is as follows. Catalyzes the hydrolytic deamination of adenosine and 2-deoxyadenosine. Plays an important role in purine metabolism and in adenosine homeostasis. Modulates signaling by extracellular adenosine, and so contributes indirectly to cellular signaling events. Acts as a positive regulator of T-cell coactivation, by binding DPP4. Its interaction with DPP4 regulates lymphocyte-epithelial cell adhesion. Enhances dendritic cell immunogenicity by affecting dendritic cell costimulatory molecule expression and cytokines and chemokines secretion. Enhances CD4+ T-cell differentiation and proliferation. Acts as a positive modulator of adenosine receptors ADORA1 and ADORA2A, by enhancing their ligand affinity via conformational change. Stimulates plasminogen activation. Plays a role in male fertility. Plays a protective role in early postimplantation embryonic development. Also responsible for the deamination of cordycepin (3'-deoxyadenosine), a fungal natural product that shows antitumor, antibacterial, antifungal, antivirus, and immune regulation properties. This chain is Adenosine deaminase (ADA), found in Bos taurus (Bovine).